The sequence spans 124 residues: Small ribosomal subunit protein uS12 (124 aa).

The interval 1–32 (MPTIQQLVRKGRQAKTTKTKTPALKGSPQRRG) is disordered. Residues 9–18 (RKGRQAKTTK) show a composition bias toward basic residues. 3-methylthioaspartic acid is present on aspartate 89. A disordered region spans residues 105–124 (QGVRNRKQARSRYGAKKEKS). A compositionally biased stretch (basic residues) spans 108–118 (RNRKQARSRYG).

It belongs to the universal ribosomal protein uS12 family. In terms of assembly, part of the 30S ribosomal subunit. Contacts proteins S8 and S17. May interact with IF1 in the 30S initiation complex.

Its function is as follows. With S4 and S5 plays an important role in translational accuracy. Functionally, interacts with and stabilizes bases of the 16S rRNA that are involved in tRNA selection in the A site and with the mRNA backbone. Located at the interface of the 30S and 50S subunits, it traverses the body of the 30S subunit contacting proteins on the other side and probably holding the rRNA structure together. The combined cluster of proteins S8, S12 and S17 appears to hold together the shoulder and platform of the 30S subunit. The chain is Small ribosomal subunit protein uS12 from Salinispora arenicola (strain CNS-205).